Reading from the N-terminus, the 71-residue chain is Small ribosomal subunit protein bS21 (71 aa).

The protein belongs to the bacterial ribosomal protein bS21 family.

The sequence is that of Small ribosomal subunit protein bS21 from Hahella chejuensis (strain KCTC 2396).